The chain runs to 360 residues: UPF0324 membrane protein plu2856 (360 aa).

9 helical membrane passes run 20–42 (LIPGLILAAILTAISIYAGNIPW), 47–69 (GLGTLTLAILAGIIVGNTVYPLL), 104–126 (VGITGLLIDAAMLSSTFFIAIWL), 136–155 (QTVILIGAGSSICGAAAIMA), 167–189 (VAVAVSTIVIFGTIAIFIYPWFY), 239–256 (MIRVMMLAPFLLLLSRYI), 277–299 (WFAVIFIAIAGFNSFNLLPAAIV), 304–326 (NIDTIMLTMAMGALGLTTHVSAI), and 333–355 (PILLALILFVWLMAGGLLINLGI).

This sequence belongs to the UPF0324 family.

It is found in the cell membrane. The protein is UPF0324 membrane protein plu2856 of Photorhabdus laumondii subsp. laumondii (strain DSM 15139 / CIP 105565 / TT01) (Photorhabdus luminescens subsp. laumondii).